The primary structure comprises 214 residues: Putative ankyrin repeat protein R844 (214 aa).

ANK repeat units lie at residues 41 to 70, 81 to 110, 111 to 140, 142 to 170, and 172 to 200; these read VEKNMIEHIVENGYLDVLKYIDSLKNQNKF, SLDKYLIMSCEFGHLEMTKYFVSQGANVKT, DNNMPLRLASQNGHIDTIKYLIENSVDVRA, NDCALRMASLFGHINVVKYLVDMGADVTS, and NNFAIIHTARSGRLELAKYLAEKGADIRA.

This Acanthamoeba polyphaga mimivirus (APMV) protein is Putative ankyrin repeat protein R844.